The sequence spans 337 residues: Protein AMBP (337 aa).

Residues 1–4 form the signal peptide; the sequence is AVSA. Residues cysteine 38 and lysine 96 each coordinate 3-hydroxy-L-kynurenine. The cysteines at positions 76 and 173 are disulfide-linked. N-linked (GlcNAc...) asparagine glycosylation is present at asparagine 100. Residues lysine 122 and lysine 134 each coordinate 3-hydroxy-L-kynurenine. Serine 200 is a glycosylation site (O-linked (Xyl...) (chondroitin sulfate) serine). Intrachain disulfides connect cysteine 216–cysteine 266, cysteine 225–cysteine 249, cysteine 241–cysteine 262, cysteine 272–cysteine 322, cysteine 281–cysteine 305, and cysteine 297–cysteine 318. BPTI/Kunitz inhibitor domains follow at residues 216-266 and 272-322; these read CQLG…LQTC and CSLP…KEYC. The N-linked (GlcNAc...) asparagine glycan is linked to asparagine 235.

In the N-terminal section; belongs to the calycin superfamily. Lipocalin family. As to quaternary structure, monomer. Homodimer. In plasma, it occurs as a monomer or dimer and in covalently-linked complexes with immunoglobulin A (IgA), ALB/albumin and F2/prothrombin. Chromophore-bound alpha-1-microglobulin interacts with the constant region of immunoglobulin A. Chromophore-bound alpha-1-microglobulin interacts with ALB with molar ratio 2:1 and 1:1; this interaction does not prevent fatty acid binding to ALB. Interacts with F2/prothrombin (via N-terminus) with molar ratio 2:1 and 1:1; this interaction does not prevent the activation of prothrombin to thrombin. Interacts with NDUFAB1, a subunit of mitochondrial complex I. Interacts with FN1. In terms of assembly, I-alpha-I plasma protease inhibitors are assembled from one or two heavy chains (HC) and one light chain, bikunin. Inter-alpha-inhibitor (I-alpha-I) is composed of ITIH1/HC1, ITIH2/HC2 and bikunin, and pre-alpha-inhibitor (P-alpha-I) of ITIH3/HC3 and bikunin. Interacts with TNFAIP6 (via Link domain). Monomer. Also occurs as a complex with tryptase in mast cells. The precursor is proteolytically processed into separately functioning proteins. In terms of processing, proteolytically cleaved in the presence of oxyhemoglobin or MPO. Post-translationally, 3-hydroxykynurenine, an oxidized tryptophan metabolite that is common in biological fluids, reacts with Cys-53, Lys-111, Lys-137, and Lys-149 to form heterogeneous polycyclic chromophores including hydroxanthommatin. The reaction by alpha-1-microglobulin is autocatalytic; the human protein forms chromophore even when expressed in insect and bacterial cells. The chromophore can react with accessible cysteines forming non-reducible thioether cross-links with other molecules of alpha-1-microglobulin or with other proteins such as Ig alpha-1 chain C region 'Cys-352'. Heavy chains are interlinked with bikunin via a chondroitin 4-sulfate bridge to the C-terminal aspartate. In terms of processing, proteolytically cleaved by PRSS3 at Kunitz domain 2. Expressed by the liver and secreted in plasma.

The protein localises to the secreted. It localises to the endoplasmic reticulum. Its subcellular location is the cytoplasm. It is found in the cytosol. The protein resides in the cell membrane. The protein localises to the nucleus membrane. It localises to the mitochondrion inner membrane. Its subcellular location is the extracellular space. It is found in the extracellular matrix. Functionally, antioxidant and tissue repair protein with reductase, heme-binding and radical-scavenging activities. Removes and protects against harmful oxidants and repairs macromolecules in intravascular and extravascular spaces and in intracellular compartments. Intravascularly, plays a regulatory role in red cell homeostasis by preventing heme- and reactive oxygen species-induced cell damage. Binds and degrades free heme to protect fetal and adult red blood cells from hemolysis. Reduces extracellular methemoglobin, a Fe3+ (ferric) form of hemoglobin that cannot bind oxygen, back to the Fe2+ (ferrous) form deoxyhemoglobin, which has oxygen-carrying potential. Upon acute inflammation, inhibits oxidation of low-density lipoprotein particles by MPO and limits vascular damage. Extravascularly, protects from oxidation products formed on extracellular matrix structures and cell membranes. Catalyzes the reduction of carbonyl groups on oxidized collagen fibers and preserves cellular and extracellular matrix ultrastructures. Importantly, counteracts the oxidative damage at blood-placenta interface, preventing leakage of free fetal hemoglobin into the maternal circulation. Intracellularly, has a role in maintaining mitochondrial redox homeostasis. Bound to complex I of the respiratory chain of mitochondria, may scavenge free radicals and preserve mitochondrial ATP synthesis. Protects renal tubule epithelial cells from heme-induced oxidative damage to mitochondria. Reduces cytochrome c from Fe3+ (ferric) to the Fe2+ (ferrous) state through formation of superoxide anion radicals in the presence of ascorbate or NADH/NADPH electron donor cofactors, ascorbate being the preferred cofactor. Has a chaperone role in facilitating the correct folding of bikunin in the endoplasmic reticulum compartment. Kunitz-type serine protease inhibitor and structural component of extracellular matrix with a role in extracellular space remodeling and cell adhesion. Among others, has antiprotease activity toward kallikrein, a protease involved in airway inflammation; inhibits GZMK/granzyme, a granule-stored serine protease involved in NK and T cell cytotoxic responses; and inhibits PLG/plasmin, a protease required for activation of matrix metalloproteinases. As part of I-alpha-I complex, provides for the heavy chains to be transferred from I-alpha-I complex to hyaluronan in the presence of TNFAIP6, in a dynamic process that releases free bikunin and remodels extracellular matrix proteoglycan structures. Free bikunin, but not its heavy chain-bound form, acts as a potent protease inhibitor in airway secretions. Part of hyaluronan-rich extracellular matrix that surrounds oocyte during cumulus oophorus expansion, an indispensable process for proper ovulation. Also inhibits calcium oxalate crystallization. Its function is as follows. Kunitz-type serine protease inhibitor. Has high catalytic efficiency for F10/blood coagulation factor Xa and may act as an anticoagulant by inhibiting prothrombin activation. Inhibits trypsin and mast cell CMA1/chymase and tryptase proteases. This chain is Protein AMBP (AMBP), found in Sus scrofa (Pig).